A 937-amino-acid chain; its full sequence is Inactive tyrosine-protein kinase transmembrane receptor ROR1 (937 aa).

The N-terminal stretch at 1 to 29 (MHRPRRRGTRPPPLALLAALLLAARGADA) is a signal peptide. Residues 30 to 406 (QETELSVSAE…KEKNKMEILY (377 aa)) are Extracellular-facing. Residues 42–141 (PTSSWNTSSE…VATNGKKVVS (100 aa)) form the Ig-like C2-type domain. 2 N-linked (GlcNAc...) asparagine glycosylation sites follow: Asn-47 and Asn-66. Cystine bridges form between Cys-79/Cys-131, Cys-170/Cys-235, Cys-178/Cys-228, Cys-219/Cys-260, Cys-248/Cys-296, Cys-252/Cys-282, Cys-313/Cys-391, Cys-334/Cys-374, and Cys-362/Cys-386. An FZ domain is found at 165-299 (EEDGFCQPYR…SPEAANCIRI (135 aa)). N-linked (GlcNAc...) asparagine glycosylation is present at Asn-184. Positions 312–391 (KCYNSTGVDY…KSDLCDIPAC (80 aa)) constitute a Kringle domain. N-linked (GlcNAc...) asparagine glycosylation occurs at Asn-315. Residues 407 to 427 (ILVPSVAIPLAIAFLFFFICV) traverse the membrane as a helical segment. Residues 428–937 (CRNNQKSSSP…HTESMISAEV (510 aa)) are Cytoplasmic-facing. The 274-residue stretch at 473-746 (VRFMEELGEC…PRFKDIHVRL (274 aa)) folds into the Protein kinase domain. Residues 479 to 487 (LGECTFGKI) and Lys-506 contribute to the ATP site. Tyr-645 is subject to Phosphotyrosine; by autocatalysis. A compositionally biased stretch (low complexity) spans 753 to 762 (SSHTSSTTPS). 3 disordered regions span residues 753–778 (SSHT…ASPV), 840–890 (GPPR…HMSI), and 916–937 (QSSL…SAEV). The span at 763–778 (GGNATTQTTSLSASPV) shows a compositional bias: polar residues. Positions 854–864 (RSPSSASGSTS) are enriched in low complexity. Residues 865-880 (TGHVASLPSSGSNQEA) show a composition bias toward polar residues.

It belongs to the protein kinase superfamily. Tyr protein kinase family. ROR subfamily. In terms of assembly, interacts with ERBB2 and IGFBP5. At postnatal P0, expressed in heart, lung, liver, kidney, spleen and inner ear.

The protein resides in the membrane. It is found in the cell projection. Its subcellular location is the axon. Has very low kinase activity in vitro and is unlikely to function as a tyrosine kinase in vivo. Receptor for ligand WNT5A which activate downstream NFkB signaling pathway and may result in the inhibition of WNT3A-mediated signaling. In inner ear, crucial for spiral ganglion neurons to innervate auditory hair cells. Via IGFBP5 ligand, forms a complex with ERBB2 to enhance CREB oncogenic signaling. In Mus musculus (Mouse), this protein is Inactive tyrosine-protein kinase transmembrane receptor ROR1 (Ror1).